We begin with the raw amino-acid sequence, 124 residues long: Mitochondrial import inner membrane translocase subunit TIM16 (124 aa).

Positions 58–109 (EAQQILNISKLSPEEVQNYEHLFKVNDKSVGDSFYLQSKVVRAKERLDEELQ) are J-like. Serine 69 carries the phosphoserine modification.

Belongs to the TIM16/PAM16 family. In terms of assembly, probable component of the PAM complex at least composed of a mitochondrial HSP70 protein, GRPEL1 or GRPEL2, TIMM44, TIMM16/PAM16 and TIMM14/DNAJC19. Interacts with DNAJC19. Directly interacts with DNAJC15; this interaction counteracts DNAJC15-dependent stimulation of HSPA9 ATPase activity. Associates with the TIM23 complex.

It is found in the mitochondrion inner membrane. Regulates ATP-dependent protein translocation into the mitochondrial matrix. Inhibits DNAJC19 stimulation of HSPA9/Mortalin ATPase activity. The polypeptide is Mitochondrial import inner membrane translocase subunit TIM16 (Magmas-ps1) (Rattus norvegicus (Rat)).